We begin with the raw amino-acid sequence, 649 residues long: DNA mismatch repair protein MutL (649 aa).

Positions 339-414 (KKKTKDESVQ…VREEESWQST (76 aa)) are disordered. The span at 342 to 360 (TKDESVQEQFHFEHTKPKE) shows a compositional bias: basic and acidic residues. A compositionally biased stretch (low complexity) spans 388–402 (PQLWQQPKQEWQPPQ).

The protein belongs to the DNA mismatch repair MutL/HexB family.

In terms of biological role, this protein is involved in the repair of mismatches in DNA. It is required for dam-dependent methyl-directed DNA mismatch repair. May act as a 'molecular matchmaker', a protein that promotes the formation of a stable complex between two or more DNA-binding proteins in an ATP-dependent manner without itself being part of a final effector complex. In Bacillus cytotoxicus (strain DSM 22905 / CIP 110041 / 391-98 / NVH 391-98), this protein is DNA mismatch repair protein MutL.